We begin with the raw amino-acid sequence, 114 residues long: uncharacterized protein (114 aa).

The segment at 1–37 is disordered; that stretch reads MLKKILSLFKKEEPKTEEKPTEVEEKKEEREEKEEKK. Residues 9-37 show a composition bias toward basic and acidic residues; it reads FKKEEPKTEEKPTEVEEKKEEREEKEEKK.

This is an uncharacterized protein from Aquifex aeolicus (strain VF5).